The primary structure comprises 154 residues: Aspartate carbamoyltransferase regulatory chain (154 aa).

Residues cysteine 109, cysteine 114, cysteine 138, and cysteine 141 each coordinate Zn(2+).

The protein belongs to the PyrI family. As to quaternary structure, contains catalytic and regulatory chains. Zn(2+) is required as a cofactor.

Its function is as follows. Involved in allosteric regulation of aspartate carbamoyltransferase. The polypeptide is Aspartate carbamoyltransferase regulatory chain (Yersinia pseudotuberculosis serotype O:1b (strain IP 31758)).